Reading from the N-terminus, the 194-residue chain is Probable GTP-binding protein EngB (194 aa).

Positions 22 to 194 (DLPEYALAGR…AWQFIKEGME (173 aa)) constitute an EngB-type G domain. GTP is bound by residues 30–37 (GRSNVGKS), 57–61 (GKTQT), 75–78 (DVPG), 142–145 (TKAD), and 174–176 (FSS). Mg(2+) is bound by residues Ser-37 and Thr-59.

This sequence belongs to the TRAFAC class TrmE-Era-EngA-EngB-Septin-like GTPase superfamily. EngB GTPase family. Requires Mg(2+) as cofactor.

Necessary for normal cell division and for the maintenance of normal septation. The chain is Probable GTP-binding protein EngB from Listeria innocua serovar 6a (strain ATCC BAA-680 / CLIP 11262).